The sequence spans 575 residues: Cytokinin dehydrogenase 1 (575 aa).

A signal peptide spans 1 to 31 (MGLTSSLRFHRQNNKTFLGIFMILVLSCIPG). Asn14, Asn38, and Asn115 each carry an N-linked (GlcNAc...) asparagine glycan. In terms of domain architecture, FAD-binding PCMH-type spans 84-262 (YQLPPLAILH…TRARISLEPA (179 aa)). Residues Ala120, Gly122, and Gly124 each coordinate FAD. Pros-8alpha-FAD histidine is present on His125. The FAD site is built by Ser126, Gln130, Asp186, Thr191, Ser197, Ile201, and Ile252. N-linked (GlcNAc...) asparagine glycans are attached at residues Asn303, Asn318, Asn437, and Asn467. Positions 498 and 536 each coordinate FAD.

This sequence belongs to the oxygen-dependent FAD-linked oxidoreductase family. The cofactor is FAD. In terms of tissue distribution, expressed in shoot apexes, lateral shoot meristems, growing tissues of young flowers, and weakly at the root-hypocotyl junction.

It is found in the vacuole. The enzyme catalyses N(6)-dimethylallyladenine + A + H2O = 3-methyl-2-butenal + adenine + AH2. Catalyzes the oxidation of cytokinins, a family of N(6)-substituted adenine derivatives that are plant hormones, where the substituent is an isopentenyl group. Catalyzes in vitro the oxidation of various types of cytokinin nucleotides that are known as direct products of cytokinin biosynthesis. Promotes adventitious root initiation downstream of MYC2-dependent jasmonate signaling. Cytokinin degraded by CKX1 is required for cell division in the female gametophyte by modulating the expression of cell cycle genes. This Arabidopsis thaliana (Mouse-ear cress) protein is Cytokinin dehydrogenase 1 (CKX1).